The primary structure comprises 434 residues: Aspartate--tRNA(Asp/Asn) ligase (434 aa).

E167 contacts L-aspartate. The interval 189 to 192 (QLFK) is aspartate. L-aspartate is bound at residue R211. Residues 211-213 (RAE), 219-221 (RHL), and E357 each bind ATP. 2 residues coordinate Mg(2+): E357 and S360. L-aspartate-binding residues include S360 and R364. ATP is bound at residue 405 to 408 (GGER).

The protein belongs to the class-II aminoacyl-tRNA synthetase family. Type 2 subfamily. As to quaternary structure, homodimer. Mg(2+) is required as a cofactor.

It is found in the cytoplasm. The catalysed reaction is tRNA(Asx) + L-aspartate + ATP = L-aspartyl-tRNA(Asx) + AMP + diphosphate. Functionally, aspartyl-tRNA synthetase with relaxed tRNA specificity since it is able to aspartylate not only its cognate tRNA(Asp) but also tRNA(Asn). Reaction proceeds in two steps: L-aspartate is first activated by ATP to form Asp-AMP and then transferred to the acceptor end of tRNA(Asp/Asn). This Haloquadratum walsbyi (strain DSM 16790 / HBSQ001) protein is Aspartate--tRNA(Asp/Asn) ligase.